The sequence spans 217 residues: Claudin-9 (217 aa).

Residues M1 to E7 are Cytoplasmic-facing. Residues L8 to P28 form a helical membrane-spanning segment. Residues L29–R81 lie on the Extracellular side of the membrane. The chain crosses the membrane as a helical span at residues A82–A102. At Q103–R116 the chain is on the cytoplasmic side. A helical membrane pass occupies residues I117–C137. Residues W138–E159 lie on the Extracellular side of the membrane. A helical membrane pass occupies residues L160–L180. Over L181–V217 the chain is Cytoplasmic. The tract at residues R194–V217 is disordered.

Belongs to the claudin family. As to quaternary structure, interacts with CLDN1, CD81 and OCLN. As to expression, expressed in the liver, in peripheral blood mononuclear cells and hepatocarcinoma cell lines.

The protein resides in the cell junction. It is found in the tight junction. Its subcellular location is the cell membrane. Functionally, plays a major role in tight junction-specific obliteration of the intercellular space, through calcium-independent cell-adhesion activity. Its function is as follows. (Microbial infection) Acts as a receptor for hepatitis C virus (HCV) entry into hepatic cells. This Homo sapiens (Human) protein is Claudin-9 (CLDN9).